Consider the following 344-residue polypeptide: Arginine N-succinyltransferase (344 aa).

L125 is a succinyl-CoA binding site. Residue H229 is the Proton donor of the active site.

The protein belongs to the arginine N-succinyltransferase family.

It catalyses the reaction succinyl-CoA + L-arginine = N(2)-succinyl-L-arginine + CoA + H(+). The protein operates within amino-acid degradation; L-arginine degradation via AST pathway; L-glutamate and succinate from L-arginine: step 1/5. Its function is as follows. Catalyzes the transfer of succinyl-CoA to arginine to produce N(2)-succinylarginine. The sequence is that of Arginine N-succinyltransferase from Shigella boydii serotype 18 (strain CDC 3083-94 / BS512).